The following is a 26-amino-acid chain: Oxyopinin-3b (26 aa).

As to expression, expressed by the venom gland.

It is found in the secreted. Its function is as follows. May have cytolytic and antimicrobial activity. This is Oxyopinin-3b from Oxyopes takobius (Lynx spider).